Consider the following 264-residue polypeptide: Apolipoprotein A-I (264 aa).

The N-terminal stretch at 1 to 18 (MKAVVLAVAVLFLTGSQA) is a signal peptide. Tandem repeats lie at residues 67–88 (LNLL…EQLG) and 89–110 (HVSQ…EEMN). The 10 X approximate tandem repeats stretch occupies residues 67-264 (LNLLENWDTL…DQITKHVTTQ (198 aa)). Met-109 bears the Methionine sulfoxide mark. Residues 111–121 (KDLEKVKKKVQ) form a 3; half-length repeat. Tandem repeats lie at residues 122–143 (PFLD…HKVE), 144–165 (PLSL…EKLG), and 166–187 (PLGK…SHLR). One copy of the 7; truncated repeat lies at 188–207 (TYTEEMGQILAERLGAIKES). Met-193 is modified (methionine sulfoxide). Copy 8 of the repeat occupies 208 to 229 (TSLAEYQTKASEHLRTFSKKAK). The stretch at 230-240 (PILEDLRQGLL) is one 9; half-length repeat. Repeat 10 spans residues 241–264 (PVAENFKTNIKNTFDQITKHVTTQ).

Belongs to the apolipoprotein A1/A4/E family. Homodimer. Interacts with APOA1BP and CLU. Component of a sperm activating protein complex (SPAP), consisting of APOA1, an immunoglobulin heavy chain, an immunoglobulin light chain and albumin. Interacts with NDRG1. Interacts with SCGB3A2. Interacts with NAXE and YJEFN3. In terms of processing, glycosylated. Palmitoylated. Post-translationally, phosphorylation sites are present in the extracellular medium.

It localises to the secreted. Functionally, participates in the reverse transport of cholesterol from tissues to the liver for excretion by promoting cholesterol efflux from tissues and by acting as a cofactor for the lecithin cholesterol acyltransferase (LCAT). As part of the SPAP complex, activates spermatozoa motility. The protein is Apolipoprotein A-I (Apoa1) of Fukomys damarensis (Damaraland mole rat).